The sequence spans 151 residues: Probable cellulase Cel12b (151 aa).

Catalysis depends on residues Glu-50 and Glu-133.

It belongs to the glycosyl hydrolase 12 (cellulase H) family.

In terms of biological role, probable cellulase. Can hydrolyze barley beta-glucan in vitro. Could be important for the survival of M.tuberculosis in the environment, perhaps in amoebal hosts. This is Probable cellulase Cel12b from Mycobacterium tuberculosis (strain ATCC 25618 / H37Rv).